The chain runs to 420 residues: Subtilisin-like protease 7 (420 aa).

An N-terminal signal peptide occupies residues 1–20 (MGFITKAIPLALAAASVING). The propeptide occupies 21–119 (AEIMETRAGV…IERDARVQIN (99 aa)). Residues 36–118 (KYIVVMNDGM…YIERDARVQI (83 aa)) enclose the Inhibitor I9 domain. The Peptidase S8 domain occupies 129-413 (SWGLARVGSK…SFPLNIYEEQ (285 aa)). Residues aspartate 161 and histidine 192 each act as charge relay system in the active site. Residues asparagine 222 and asparagine 252 are each glycosylated (N-linked (GlcNAc...) asparagine). Serine 346 (charge relay system) is an active-site residue. N-linked (GlcNAc...) asparagine glycosylation occurs at asparagine 396.

It belongs to the peptidase S8 family.

The protein resides in the secreted. Its function is as follows. Secreted subtilisin-like serine protease with keratinolytic activity that contributes to pathogenicity. This is Subtilisin-like protease 7 (SUB7) from Arthroderma benhamiae (strain ATCC MYA-4681 / CBS 112371) (Trichophyton mentagrophytes).